A 350-amino-acid polypeptide reads, in one-letter code: Ceramide synthase 1 (350 aa).

At Ala2 the chain carries N-acetylalanine. The next 6 helical transmembrane spans lie at 53–73 (AHLAAPELLLAVLCALGWTAL), 103–123 (AWKLLFYLACWSYCAYLLLGT), 148–168 (IAVAYLLQGSFYCHSIYATVY), 176–196 (SVVMLVHHVVTLLLIASSYAF), 239–259 (VANLGCLSFCFCWFWFRLYWF), and 287–307 (LLLLLMVMNIYWFLYIVAFAA). Positions 97–311 (ARLPESAWKL…IVAFAAKVLT (215 aa)) constitute a TLC domain.

Acetylated. Deacetylation by SIRT3 increases enzyme activity and promotes mitochondrial ceramide accumulation. In terms of tissue distribution, expressed in brain, skeletal muscle, heart and perigonadal white adipose tissue.

Its subcellular location is the endoplasmic reticulum membrane. It catalyses the reaction a sphingoid base + octadecanoyl-CoA = an N-octadecanoyl-sphingoid base + CoA + H(+). The enzyme catalyses sphinganine + octadecanoyl-CoA = N-(octadecanoyl)-sphinganine + CoA + H(+). It carries out the reaction hexadecasphinganine + octadecanoyl-CoA = N-octadecanoylhexadecasphinganine + CoA + H(+). The catalysed reaction is sphing-4-enine + octadecanoyl-CoA = N-octadecanoylsphing-4-enine + CoA + H(+). It catalyses the reaction heptadecasphing-4-enine + octadecanoyl-CoA = N-octadecanoyl-heptadecasphing-4-enine + CoA + H(+). The enzyme catalyses 2-hydroxyoctadecanoyl-CoA + sphinganine = N-(2-hydroxyoctadecanoyl)-sphinganine + CoA + H(+). It carries out the reaction eicosanoyl-CoA + sphinganine = N-eicosanoylsphinganine + CoA + H(+). It functions in the pathway lipid metabolism; sphingolipid metabolism. Inhibited by fumonisin B1. Functionally, ceramide synthase that catalyzes the transfer of the acyl chain from acyl-CoA to a sphingoid base, with high selectivity toward stearoyl-CoA (octadecanoyl-CoA; C18:0-CoA). N-acylates sphinganine and sphingosine bases to form dihydroceramides and ceramides in de novo synthesis and salvage pathways, respectively. Plays a predominant role in skeletal muscle in regulating C18 ceramide and dihydroceramide levels with an impact on whole-body glucose metabolism and insulin sensitivity. Protects from diet-induced obesity by suppressing the uptake of glucose in multiple organs in a FGF21-dependent way. Generates C18 ceramides in the brain, playing a critical role in cerebellar development and Purkinje cell function. In response to cellular stress mediates mitophagy, a known defense mechanism against cell transformation and aging. Upon mitochondria fission, generates C18 ceramides that anchor lipidated MAP1LC3B/LC3B-II autophagolysosomes to outer mitochondrial membranes to eliminate damaged mitochondria. This Mus musculus (Mouse) protein is Ceramide synthase 1.